The sequence spans 136 residues: Large ribosomal subunit protein uL16 (136 aa).

Belongs to the universal ribosomal protein uL16 family. As to quaternary structure, part of the 50S ribosomal subunit.

Its function is as follows. Binds 23S rRNA and is also seen to make contacts with the A and possibly P site tRNAs. The polypeptide is Large ribosomal subunit protein uL16 (Mesomycoplasma hyopneumoniae (strain 232) (Mycoplasma hyopneumoniae)).